Here is a 178-residue protein sequence, read N- to C-terminus: Alkyl hydroperoxide reductase AhpD (178 aa).

The active-site Proton donor is the C131. An intrachain disulfide couples C131 to C134. The active-site Cysteine sulfenic acid (-SOH) intermediate is the C134.

This sequence belongs to the AhpD family. In terms of assembly, homotrimer.

It catalyses the reaction N(6)-[(R)-dihydrolipoyl]-L-lysyl-[lipoyl-carrier protein] + a hydroperoxide = N(6)-[(R)-lipoyl]-L-lysyl-[lipoyl-carrier protein] + an alcohol + H2O. Antioxidant protein with alkyl hydroperoxidase activity. Required for the reduction of the AhpC active site cysteine residues and for the regeneration of the AhpC enzyme activity. The sequence is that of Alkyl hydroperoxide reductase AhpD from Streptomyces coelicolor (strain ATCC BAA-471 / A3(2) / M145).